We begin with the raw amino-acid sequence, 206 residues long: LexA repressor (206 aa).

The H-T-H motif DNA-binding region spans 27–47 (YEEIRQNLGFRSLNAVFKHLK). Catalysis depends on for autocatalytic cleavage activity residues S120 and K157.

It belongs to the peptidase S24 family. Homodimer.

The catalysed reaction is Hydrolysis of Ala-|-Gly bond in repressor LexA.. Represses a number of genes involved in the response to DNA damage (SOS response), including recA and lexA. In the presence of single-stranded DNA, RecA interacts with LexA causing an autocatalytic cleavage which disrupts the DNA-binding part of LexA, leading to derepression of the SOS regulon and eventually DNA repair. In Syntrophobacter fumaroxidans (strain DSM 10017 / MPOB), this protein is LexA repressor.